The following is a 414-amino-acid chain: 2,3-bisphosphoglycerate-independent phosphoglycerate mutase (414 aa).

Belongs to the BPG-independent phosphoglycerate mutase family. A-PGAM subfamily.

It catalyses the reaction (2R)-2-phosphoglycerate = (2R)-3-phosphoglycerate. It functions in the pathway carbohydrate degradation; glycolysis; pyruvate from D-glyceraldehyde 3-phosphate: step 3/5. Catalyzes the interconversion of 2-phosphoglycerate and 3-phosphoglycerate. The sequence is that of 2,3-bisphosphoglycerate-independent phosphoglycerate mutase from Saccharolobus islandicus (strain M.14.25 / Kamchatka #1) (Sulfolobus islandicus).